Reading from the N-terminus, the 345-residue chain is Dihydroorotate dehydrogenase (quinone) (345 aa).

FMN contacts are provided by residues Ala65–Lys69 and Thr89. Lys69 contributes to the substrate binding site. A substrate-binding site is contributed by Asn114–Phe118. FMN is bound by residues Asn146 and Asn179. Position 179 (Asn179) interacts with substrate. The Nucleophile role is filled by Ser182. Asn184 serves as a coordination point for substrate. FMN contacts are provided by Lys224 and Thr252. A substrate-binding site is contributed by Asn253–Thr254. FMN contacts are provided by residues Gly275, Gly304, and Tyr325 to Thr326.

This sequence belongs to the dihydroorotate dehydrogenase family. Type 2 subfamily. Monomer. FMN is required as a cofactor.

It localises to the cell membrane. It carries out the reaction (S)-dihydroorotate + a quinone = orotate + a quinol. The protein operates within pyrimidine metabolism; UMP biosynthesis via de novo pathway; orotate from (S)-dihydroorotate (quinone route): step 1/1. Catalyzes the conversion of dihydroorotate to orotate with quinone as electron acceptor. In Leptothrix cholodnii (strain ATCC 51168 / LMG 8142 / SP-6) (Leptothrix discophora (strain SP-6)), this protein is Dihydroorotate dehydrogenase (quinone).